The sequence spans 386 residues: Probable Xaa-Pro aminopeptidase PMAA_074180 (386 aa).

Asp160, Asp171, Glu311, and Glu350 together coordinate Mn(2+).

It belongs to the peptidase M24B family. It depends on Mn(2+) as a cofactor.

It catalyses the reaction Release of any N-terminal amino acid, including proline, that is linked to proline, even from a dipeptide or tripeptide.. Its function is as follows. Catalyzes the removal of a penultimate prolyl residue from the N-termini of peptides. The polypeptide is Probable Xaa-Pro aminopeptidase PMAA_074180 (Talaromyces marneffei (strain ATCC 18224 / CBS 334.59 / QM 7333) (Penicillium marneffei)).